The chain runs to 571 residues: Proline--tRNA ligase (571 aa).

This sequence belongs to the class-II aminoacyl-tRNA synthetase family. ProS type 1 subfamily. As to quaternary structure, homodimer.

It is found in the cytoplasm. The catalysed reaction is tRNA(Pro) + L-proline + ATP = L-prolyl-tRNA(Pro) + AMP + diphosphate. Its function is as follows. Catalyzes the attachment of proline to tRNA(Pro) in a two-step reaction: proline is first activated by ATP to form Pro-AMP and then transferred to the acceptor end of tRNA(Pro). As ProRS can inadvertently accommodate and process non-cognate amino acids such as alanine and cysteine, to avoid such errors it has two additional distinct editing activities against alanine. One activity is designated as 'pretransfer' editing and involves the tRNA(Pro)-independent hydrolysis of activated Ala-AMP. The other activity is designated 'posttransfer' editing and involves deacylation of mischarged Ala-tRNA(Pro). The misacylated Cys-tRNA(Pro) is not edited by ProRS. This chain is Proline--tRNA ligase, found in Ligilactobacillus salivarius (strain UCC118) (Lactobacillus salivarius).